The primary structure comprises 322 residues: Tyrosine recombinase XerC (322 aa).

The Core-binding (CB) domain occupies 14–104 (PDLREAAAAW…ALRSFARHLD (91 aa)). Residues 125–311 (RLPRPLPVAA…DSARLLSAFD (187 aa)) form the Tyr recombinase domain. Active-site residues include Arg170, Lys195, His263, Arg266, and His289. Tyr298 (O-(3'-phospho-DNA)-tyrosine intermediate) is an active-site residue.

It belongs to the 'phage' integrase family. XerC subfamily. Forms a cyclic heterotetrameric complex composed of two molecules of XerC and two molecules of XerD.

It is found in the cytoplasm. Functionally, site-specific tyrosine recombinase, which acts by catalyzing the cutting and rejoining of the recombining DNA molecules. The XerC-XerD complex is essential to convert dimers of the bacterial chromosome into monomers to permit their segregation at cell division. It also contributes to the segregational stability of plasmids. This Methylobacterium nodulans (strain LMG 21967 / CNCM I-2342 / ORS 2060) protein is Tyrosine recombinase XerC.